A 307-amino-acid polypeptide reads, in one-letter code: Replication termination factor 2 (307 aa).

The segment at 193–296 (AKLEKKTKKP…SSAKRSKEES (104 aa)) is disordered. A compositionally biased stretch (basic and acidic residues) spans 227–241 (GKPEEADPDPREKKS). Ser-288 bears the Phosphoserine mark.

Belongs to the rtf2 family. As to quaternary structure, interacts with DDI2; probably also interacts with DDI1. In terms of processing, undergoes proteasomal degradation, via DDI1 and DDI2. Removal from stalled replisomes and degradation are required for genome stability.

The protein localises to the chromosome. Functionally, replication termination factor which is a component of the elongating replisome. Required for ATR pathway signaling upon DNA damage and has a positive activity during DNA replication. Might function to facilitate fork pausing at replication fork barriers like the rDNA. May be globally required to stimulate ATR signaling after the fork stalls or encounters a lesion. Interacts with nascent DNA. The chain is Replication termination factor 2 from Mus musculus (Mouse).